A 397-amino-acid polypeptide reads, in one-letter code: Elongation factor Tu (397 aa).

Residues 10 to 206 form the tr-type G domain; sequence KPHVNIGTIG…EVDAYIPTPE (197 aa). The segment at 19–26 is G1; it reads GHVDHGKT. Residue 19–26 coordinates GTP; that stretch reads GHVDHGKT. T26 contacts Mg(2+). Residues 60–64 are G2; it reads GITIN. The segment at 81 to 84 is G3; sequence DCPG. GTP-binding positions include 81-85 and 136-139; these read DCPGH and NKAD. A G4 region spans residues 136–139; it reads NKAD. The segment at 174 to 176 is G5; that stretch reads SAL.

The protein belongs to the TRAFAC class translation factor GTPase superfamily. Classic translation factor GTPase family. EF-Tu/EF-1A subfamily. Monomer.

The protein localises to the cytoplasm. It carries out the reaction GTP + H2O = GDP + phosphate + H(+). In terms of biological role, GTP hydrolase that promotes the GTP-dependent binding of aminoacyl-tRNA to the A-site of ribosomes during protein biosynthesis. This is Elongation factor Tu from Clostridium acetobutylicum (strain ATCC 824 / DSM 792 / JCM 1419 / IAM 19013 / LMG 5710 / NBRC 13948 / NRRL B-527 / VKM B-1787 / 2291 / W).